Reading from the N-terminus, the 787-residue chain is DNA ligase (787 aa).

NAD(+)-binding positions include 32–36, 81–82, and glutamate 121; these read DVEYD and SL. Lysine 123 (N6-AMP-lysine intermediate) is an active-site residue. The NAD(+) site is built by arginine 144, glutamate 181, lysine 297, and lysine 321. The Zn(2+) site is built by cysteine 415, cysteine 418, cysteine 445, and cysteine 451. Residues 703–787 enclose the BRCT domain; that stretch reads VEGLPLAGQT…RLIELGVAVD (85 aa).

It belongs to the NAD-dependent DNA ligase family. LigA subfamily. Mg(2+) serves as cofactor. Requires Mn(2+) as cofactor.

It catalyses the reaction NAD(+) + (deoxyribonucleotide)n-3'-hydroxyl + 5'-phospho-(deoxyribonucleotide)m = (deoxyribonucleotide)n+m + AMP + beta-nicotinamide D-nucleotide.. DNA ligase that catalyzes the formation of phosphodiester linkages between 5'-phosphoryl and 3'-hydroxyl groups in double-stranded DNA using NAD as a coenzyme and as the energy source for the reaction. It is essential for DNA replication and repair of damaged DNA. The chain is DNA ligase from Pseudomonas syringae pv. syringae (strain B728a).